Consider the following 339-residue polypeptide: tRNA N6-adenosine threonylcarbamoyltransferase (339 aa).

Fe cation contacts are provided by H111 and H115. Substrate-binding positions include 134 to 138 (LVSGG), D167, G180, and N274. D302 lines the Fe cation pocket.

It belongs to the KAE1 / TsaD family. It depends on Fe(2+) as a cofactor.

Its subcellular location is the cytoplasm. The enzyme catalyses L-threonylcarbamoyladenylate + adenosine(37) in tRNA = N(6)-L-threonylcarbamoyladenosine(37) in tRNA + AMP + H(+). Required for the formation of a threonylcarbamoyl group on adenosine at position 37 (t(6)A37) in tRNAs that read codons beginning with adenine. Is involved in the transfer of the threonylcarbamoyl moiety of threonylcarbamoyl-AMP (TC-AMP) to the N6 group of A37, together with TsaE and TsaB. TsaD likely plays a direct catalytic role in this reaction. In Methylobacillus flagellatus (strain ATCC 51484 / DSM 6875 / VKM B-1610 / KT), this protein is tRNA N6-adenosine threonylcarbamoyltransferase.